The primary structure comprises 357 residues: Guanine nucleotide-binding protein G(o) subunit alpha (357 aa).

Glycine 2 carries the N-myristoyl glycine lipid modification. Cysteine 3 carries the S-palmitoyl cysteine lipid modification. One can recognise a G-alpha domain in the interval 32–357 (KDIKLLLLGA…ANNLRGCGLY (326 aa)). The segment at 35-48 (KLLLLGAGESGKST) is G1 motif. Residues 40 to 47 (GAGESGKS), 179 to 185 (LRTRVKT), 204 to 208 (DVGGQ), 273 to 276 (NKKD), and alanine 329 contribute to the GTP site. Serine 47 and threonine 185 together coordinate Mg(2+). A G2 motif region spans residues 177 to 185 (DILRTRVKT). Residues 200–209 (FKLFDVGGQR) form a G3 motif region. Residues 269–276 (ILFLNKKD) form a G4 motif region. The interval 327 to 332 (TCATDT) is G5 motif.

This sequence belongs to the G-alpha family. G(i/o/t/z) subfamily. In terms of assembly, g proteins are composed of 3 units; alpha, beta and gamma. The alpha chain contains the guanine nucleotide binding site.

Guanine nucleotide-binding proteins (G proteins) are involved as modulators or transducers in various transmembrane signaling systems. The G(o) protein function is not clear. In Mizuhopecten yessoensis (Japanese scallop), this protein is Guanine nucleotide-binding protein G(o) subunit alpha (SCGOA).